The primary structure comprises 184 residues: Acyl-homoserine-lactone synthase (184 aa).

It belongs to the autoinducer synthase family.

It carries out the reaction a fatty acyl-[ACP] + S-adenosyl-L-methionine = an N-acyl-L-homoserine lactone + S-methyl-5'-thioadenosine + holo-[ACP] + H(+). Involved in the synthesis of the acyl-homoserine lactone (AHL) signal N-(3-hydroxydodecanoyl)-L-HSL (3-hydroxy-C(12)-HSL or OH-dDHL). Required for normal biofilm development. This Acinetobacter baumannii protein is Acyl-homoserine-lactone synthase.